The sequence spans 124 residues: UPF0231 protein Sbal223_3655 (124 aa).

The protein belongs to the UPF0231 family.

This chain is UPF0231 protein Sbal223_3655, found in Shewanella baltica (strain OS223).